Reading from the N-terminus, the 345-residue chain is S-adenosylmethionine:tRNA ribosyltransferase-isomerase (345 aa).

This sequence belongs to the QueA family. As to quaternary structure, monomer.

It localises to the cytoplasm. The enzyme catalyses 7-aminomethyl-7-carbaguanosine(34) in tRNA + S-adenosyl-L-methionine = epoxyqueuosine(34) in tRNA + adenine + L-methionine + 2 H(+). The protein operates within tRNA modification; tRNA-queuosine biosynthesis. In terms of biological role, transfers and isomerizes the ribose moiety from AdoMet to the 7-aminomethyl group of 7-deazaguanine (preQ1-tRNA) to give epoxyqueuosine (oQ-tRNA). In Acinetobacter baumannii (strain ATCC 17978 / DSM 105126 / CIP 53.77 / LMG 1025 / NCDC KC755 / 5377), this protein is S-adenosylmethionine:tRNA ribosyltransferase-isomerase.